A 36-amino-acid polypeptide reads, in one-letter code: Photosystem I reaction center subunit VIII (36 aa).

The helical transmembrane segment at 8-28 (SVLVPLVGLVFPAIAMASLFL) threads the bilayer.

Belongs to the PsaI family.

It is found in the plastid. It localises to the chloroplast thylakoid membrane. In terms of biological role, may help in the organization of the PsaL subunit. The polypeptide is Photosystem I reaction center subunit VIII (Helianthus annuus (Common sunflower)).